The primary structure comprises 481 residues: tRNA-2-methylthio-N(6)-dimethylallyladenosine synthase (481 aa).

In terms of domain architecture, MTTase N-terminal spans 24–140; the sequence is RKLFIESYGC…LPNLINEVEE (117 aa). Positions 33, 69, 103, 178, 182, and 185 each coordinate [4Fe-4S] cluster. The Radical SAM core domain maps to 164–410; it reads QSNGVSAFVS…VDLQQKHSKQ (247 aa). The TRAM domain maps to 413 to 476; the sequence is NSVIGTTVEV…SATLIGEPIG (64 aa).

This sequence belongs to the methylthiotransferase family. MiaB subfamily. In terms of assembly, monomer. The cofactor is [4Fe-4S] cluster.

Its subcellular location is the cytoplasm. It carries out the reaction N(6)-dimethylallyladenosine(37) in tRNA + (sulfur carrier)-SH + AH2 + 2 S-adenosyl-L-methionine = 2-methylsulfanyl-N(6)-dimethylallyladenosine(37) in tRNA + (sulfur carrier)-H + 5'-deoxyadenosine + L-methionine + A + S-adenosyl-L-homocysteine + 2 H(+). Catalyzes the methylthiolation of N6-(dimethylallyl)adenosine (i(6)A), leading to the formation of 2-methylthio-N6-(dimethylallyl)adenosine (ms(2)i(6)A) at position 37 in tRNAs that read codons beginning with uridine. The polypeptide is tRNA-2-methylthio-N(6)-dimethylallyladenosine synthase (Christiangramia forsetii (strain DSM 17595 / CGMCC 1.15422 / KT0803) (Gramella forsetii)).